Here is a 331-residue protein sequence, read N- to C-terminus: D/L-glyceraldehyde reductase (331 aa).

Catalysis depends on Tyr51, which acts as the Proton donor. His114 lines the substrate pocket. Residue 213-276 (SAFGNNTKGL…SVTKARIAEN (64 aa)) coordinates NADP(+).

The protein belongs to the aldo/keto reductase family.

It catalyses the reaction glycerol + NADP(+) = L-glyceraldehyde + NADPH + H(+). It carries out the reaction glycerol + NADP(+) = D-glyceraldehyde + NADPH + H(+). It participates in carbohydrate acid metabolism. Functionally, mediates the conversion of L-glyceraldehyde to glycerol in D-galacturonate catabolic process. Also able to reduce D-glyceraldehyde. In Hypocrea jecorina (Trichoderma reesei), this protein is D/L-glyceraldehyde reductase (gld1).